A 25-amino-acid polypeptide reads, in one-letter code: Growth-blocking peptide (25 aa).

A disulfide bridge connects residues C7 and C19. Residue Q25 is modified to Glutamine amide.

This sequence belongs to the GBP/PSP1/paralytic peptide family. In terms of tissue distribution, hemolymph.

In terms of biological role, biogenic peptide that prevents, in lepidopteran, the onset of metamorphosis from larva to pupa. This growth-blocking peptide has repressive activity against juvenile hormone esterase. The chain is Growth-blocking peptide from Cotesia kariyai (Parasitic wasp).